Consider the following 33-residue polypeptide: Neutrophil defensin 3 (33 aa).

Disulfide bonds link Cys3–Cys31, Cys5–Cys20, and Cys10–Cys30.

It belongs to the alpha-defensin family.

It localises to the secreted. Its function is as follows. Anti-fungal and bactericidal activity, greater against Gram-positive bacteria. This Mesocricetus auratus (Golden hamster) protein is Neutrophil defensin 3.